Reading from the N-terminus, the 330-residue chain is ADP-L-glycero-D-manno-heptose-6-epimerase (330 aa).

NADP(+) contacts are provided by residues 11–12 (FI), 32–33 (DN), Lys39, Lys54, 75–79 (EGACS), and Asn92. Tyr139 acts as the Proton acceptor in catalysis. Position 143 (Lys143) interacts with NADP(+). Asn168 serves as a coordination point for substrate. Residues Val169 and Lys177 each contribute to the NADP(+) site. Lys177 functions as the Proton acceptor in the catalytic mechanism. Residues Arg179, His186, 200-203 (FGEY), Arg213, and Tyr292 contribute to the substrate site.

Belongs to the NAD(P)-dependent epimerase/dehydratase family. HldD subfamily. As to quaternary structure, homopentamer. NADP(+) serves as cofactor.

The catalysed reaction is ADP-D-glycero-beta-D-manno-heptose = ADP-L-glycero-beta-D-manno-heptose. The protein operates within nucleotide-sugar biosynthesis; ADP-L-glycero-beta-D-manno-heptose biosynthesis; ADP-L-glycero-beta-D-manno-heptose from D-glycero-beta-D-manno-heptose 7-phosphate: step 4/4. Functionally, catalyzes the interconversion between ADP-D-glycero-beta-D-manno-heptose and ADP-L-glycero-beta-D-manno-heptose via an epimerization at carbon 6 of the heptose. This is ADP-L-glycero-D-manno-heptose-6-epimerase from Burkholderia ambifaria (strain MC40-6).